The chain runs to 154 residues: Xanthine-guanine phosphoribosyltransferase (154 aa).

5-phospho-alpha-D-ribose 1-diphosphate is bound by residues 37-38 (RG), arginine 69, and 88-96 (EDLVDSGDT). Arginine 69 provides a ligand contact to GMP. Aspartate 89 is a binding site for Mg(2+). Aspartate 92 and isoleucine 135 together coordinate guanine. Residues aspartate 92 and isoleucine 135 each coordinate xanthine. GMP is bound by residues 92-96 (DSGDT) and 134-135 (WI).

This sequence belongs to the purine/pyrimidine phosphoribosyltransferase family. XGPT subfamily. As to quaternary structure, homotetramer. Requires Mg(2+) as cofactor.

It is found in the cell inner membrane. It carries out the reaction GMP + diphosphate = guanine + 5-phospho-alpha-D-ribose 1-diphosphate. The catalysed reaction is XMP + diphosphate = xanthine + 5-phospho-alpha-D-ribose 1-diphosphate. It catalyses the reaction IMP + diphosphate = hypoxanthine + 5-phospho-alpha-D-ribose 1-diphosphate. It participates in purine metabolism; GMP biosynthesis via salvage pathway; GMP from guanine: step 1/1. The protein operates within purine metabolism; XMP biosynthesis via salvage pathway; XMP from xanthine: step 1/1. Its function is as follows. Purine salvage pathway enzyme that catalyzes the transfer of the ribosyl-5-phosphate group from 5-phospho-alpha-D-ribose 1-diphosphate (PRPP) to the N9 position of the 6-oxopurines guanine and xanthine to form the corresponding ribonucleotides GMP (guanosine 5'-monophosphate) and XMP (xanthosine 5'-monophosphate), with the release of PPi. To a lesser extent, also acts on hypoxanthine. This is Xanthine-guanine phosphoribosyltransferase from Vibrio atlanticus (strain LGP32) (Vibrio splendidus (strain Mel32)).